The sequence spans 183 residues: Ribosome maturation factor RimM (183 aa).

The region spanning 95-171 (DPDEFYDHEL…VVVIDPPEGL (77 aa)) is the PRC barrel domain.

The protein belongs to the RimM family. As to quaternary structure, binds ribosomal protein uS19.

The protein localises to the cytoplasm. An accessory protein needed during the final step in the assembly of 30S ribosomal subunit, possibly for assembly of the head region. Essential for efficient processing of 16S rRNA. May be needed both before and after RbfA during the maturation of 16S rRNA. It has affinity for free ribosomal 30S subunits but not for 70S ribosomes. This is Ribosome maturation factor RimM from Rhodococcus opacus (strain B4).